Here is a 646-residue protein sequence, read N- to C-terminus: Peptidylprolyl isomerase domain and WD repeat-containing protein 1 (646 aa).

Residues 1–30 (MAAESGSDFQQRRRRRRDPEEPEKTELSER) form a disordered region. The residue at position 2 (Ala-2) is an N-acetylalanine. Residues 17–30 (RDPEEPEKTELSER) show a composition bias toward basic and acidic residues. 4 WD repeats span residues 88–126 (MHRDVITHVVCTKTDFIITASHDGHVKFWKKIEEGIEFV), 131–170 (SHLGVIECIAVSSEGALFCSVGDDKAMKVFDVVNFDMINM), 221–260 (LHTSPLTQIRLNPVYKAVVSSDKSGMIEYWTGPPHEYKFP), and 278–319 (KCKA…RVFD). A compositionally biased stretch (basic and acidic residues) spans 455 to 478 (EPEDTKSADSDRDVFNEKPSKEEV). Residues 455 to 490 (EPEDTKSADSDRDVFNEKPSKEEVMAATQAEGPKRV) form a disordered region. Residues 490–645 (VSDSAIIHTS…EDVSIINITV (156 aa)) form the PPIase cyclophilin-type domain.

The protein belongs to the cyclophilin-type PPIase family. PPIL1 subfamily. As to quaternary structure, identified in the spliceosome C complex.

Its subcellular location is the nucleus. The enzyme catalyses [protein]-peptidylproline (omega=180) = [protein]-peptidylproline (omega=0). With respect to regulation, inhibited by cyclosporin A (CsA). PPIase that catalyzes the cis-trans isomerization of proline imidic peptide bonds in oligopeptides and may therefore assist protein folding. May be involved in pre-mRNA splicing. This chain is Peptidylprolyl isomerase domain and WD repeat-containing protein 1, found in Pongo abelii (Sumatran orangutan).